The primary structure comprises 275 residues: 3-methyl-2-oxobutanoate hydroxymethyltransferase (275 aa).

The Mg(2+) site is built by D49 and D88. 3-methyl-2-oxobutanoate is bound by residues 49–50 (DS), D88, and K118. E120 serves as a coordination point for Mg(2+). E187 acts as the Proton acceptor in catalysis.

This sequence belongs to the PanB family. Homodecamer; pentamer of dimers. Mg(2+) serves as cofactor.

It localises to the cytoplasm. It catalyses the reaction 3-methyl-2-oxobutanoate + (6R)-5,10-methylene-5,6,7,8-tetrahydrofolate + H2O = 2-dehydropantoate + (6S)-5,6,7,8-tetrahydrofolate. The protein operates within cofactor biosynthesis; (R)-pantothenate biosynthesis; (R)-pantoate from 3-methyl-2-oxobutanoate: step 1/2. In terms of biological role, catalyzes the reversible reaction in which hydroxymethyl group from 5,10-methylenetetrahydrofolate is transferred onto alpha-ketoisovalerate to form ketopantoate. The polypeptide is 3-methyl-2-oxobutanoate hydroxymethyltransferase (Nitrobacter hamburgensis (strain DSM 10229 / NCIMB 13809 / X14)).